We begin with the raw amino-acid sequence, 644 residues long: Low affinity sulfate transporter 3 (644 aa).

The span at 1–19 (MSSLGTEQFSERSQWVLNS) shows a compositional bias: polar residues. Positions 1 to 20 (MSSLGTEQFSERSQWVLNSP) are disordered. 13 consecutive transmembrane segments (helical) span residues 50 to 70 (AVSF…YSAT), 76 to 96 (LLSG…YANL), 99 to 119 (LDPQ…ALMG), 124 to 144 (IAIG…PKVI), 156 to 176 (LVFT…VLRL), 179 to 199 (LVDF…AIVI), 242 to 262 (PLNF…RFIG), 268 to 288 (FFWL…LIVF), 328 to 348 (IGLI…RSFA), 394 to 414 (CKTA…LELF), 418 to 438 (LYYT…PGLI), 455 to 475 (LACL…GLLI), and 518 to 538 (PGIL…AGFV). Residues 511-635 (YPMAVTTPGI…LTVAEAVDAC (125 aa)) enclose the STAS domain.

This sequence belongs to the SLC26A/SulP transporter (TC 2.A.53) family.

The protein localises to the membrane. In terms of biological role, low-affinity H(+)/sulfate cotransporter which may be involved in the internal transport of sulfate between cellular or subcellular compartments within the plant. This is Low affinity sulfate transporter 3 (ST3) from Stylosanthes hamata (Caribbean stylo).